The sequence spans 752 residues: Polyribonucleotide nucleotidyltransferase (752 aa).

2 residues coordinate Mg(2+): Asp-542 and Asp-548. The region spanning 608–667 (PRITTIQIPVSKIGELIGPKGKNINALTEETGANISIEDDGTVFISAASGEAAEAAIEKI) is the KH domain. One can recognise an S1 motif domain in the interval 679-748 (GERFLGTVVK…NRGKISLVPV (70 aa)).

This sequence belongs to the polyribonucleotide nucleotidyltransferase family. The cofactor is Mg(2+).

The protein localises to the cytoplasm. The enzyme catalyses RNA(n+1) + phosphate = RNA(n) + a ribonucleoside 5'-diphosphate. Functionally, involved in mRNA degradation. Catalyzes the phosphorolysis of single-stranded polyribonucleotides processively in the 3'- to 5'-direction. This chain is Polyribonucleotide nucleotidyltransferase, found in Corynebacterium efficiens (strain DSM 44549 / YS-314 / AJ 12310 / JCM 11189 / NBRC 100395).